Reading from the N-terminus, the 424-residue chain is Serine hydroxymethyltransferase (424 aa).

(6S)-5,6,7,8-tetrahydrofolate is bound by residues Leu-113 and 117-119 (GHL). At Lys-222 the chain carries N6-(pyridoxal phosphate)lysine. Position 361-363 (361-363 (SPF)) interacts with (6S)-5,6,7,8-tetrahydrofolate.

It belongs to the SHMT family. Homodimer. Pyridoxal 5'-phosphate serves as cofactor.

It is found in the cytoplasm. The enzyme catalyses (6R)-5,10-methylene-5,6,7,8-tetrahydrofolate + glycine + H2O = (6S)-5,6,7,8-tetrahydrofolate + L-serine. The protein operates within one-carbon metabolism; tetrahydrofolate interconversion. It participates in amino-acid biosynthesis; glycine biosynthesis; glycine from L-serine: step 1/1. Its function is as follows. Catalyzes the reversible interconversion of serine and glycine with tetrahydrofolate (THF) serving as the one-carbon carrier. This reaction serves as the major source of one-carbon groups required for the biosynthesis of purines, thymidylate, methionine, and other important biomolecules. Also exhibits THF-independent aldolase activity toward beta-hydroxyamino acids, producing glycine and aldehydes, via a retro-aldol mechanism. The chain is Serine hydroxymethyltransferase from Flavobacterium psychrophilum (strain ATCC 49511 / DSM 21280 / CIP 103535 / JIP02/86).